Consider the following 425-residue polypeptide: Orexin/Hypocretin receptor type 1 (425 aa).

A disordered region spans residues 1-25 (MEPSATPGPQMGVPTEGRERSPEPP). The Extracellular portion of the chain corresponds to 1 to 46 (MEPSATPGPQMGVPTEGRERSPEPPDYEDEFLRYLWRDYLYPKQYE). The tract at residues 26–41 (DYEDEFLRYLWRDYLY) is required for response to orexin-A. The helical transmembrane segment at 47–67 (WVLIAAYVAVFFVALVGNTLV) threads the bilayer. Residues 68-82 (CLAVWRNHHMRTVTN) lie on the Cytoplasmic side of the membrane. The chain crosses the membrane as a helical span at residues 83 to 105 (YFIVNLSLADVLVTAICLPASLL). Residues 106-119 (VDITESWLFGHALC) lie on the Extracellular side of the membrane. The cysteines at positions 119 and 202 are disulfide-linked. The helical transmembrane segment at 120–140 (KVIPYLQAVSVSVAVLTLSFI) threads the bilayer. The Cytoplasmic portion of the chain corresponds to 141–160 (ALDRWYAICHPLLFKSTARR). A helical transmembrane segment spans residues 161–182 (ARGSILGIWAVSLAVMVPQAAV). Residues 183-213 (MECSSVLPELANRTRLFSVCDERWADDLYPK) lie on the Extracellular side of the membrane. N-linked (GlcNAc...) asparagine glycosylation is present at Asn-194. The chain crosses the membrane as a helical span at residues 214–235 (IYHSCFFIVTYLAPLGLMAMAY). The Cytoplasmic portion of the chain corresponds to 236 to 298 (FQIFRKLWGR…QMRARRKTAK (63 aa)). The chain crosses the membrane as a helical span at residues 299-321 (MLMVVLLVFALCYLPISVLNVLK). Topologically, residues 322–336 (RVFGMFRQASDREAV) are extracellular. Residues 337–360 (YACFTFSHWLVYANSAANPIIYNF) traverse the membrane as a helical segment. The Cytoplasmic portion of the chain corresponds to 361 to 425 (LSGKFREQFK…LLTSVTTVLP (65 aa)).

This sequence belongs to the G-protein coupled receptor 1 family.

The protein localises to the cell membrane. Moderately selective excitatory receptor for orexin-A and, with a lower affinity, for orexin-B neuropeptide. Triggers an increase in cytoplasmic Ca(2+) levels in response to orexin-A binding. This is Orexin/Hypocretin receptor type 1 from Bos taurus (Bovine).